The primary structure comprises 178 residues: ATP synthase subunit delta (178 aa).

This sequence belongs to the ATPase delta chain family. As to quaternary structure, F-type ATPases have 2 components, F(1) - the catalytic core - and F(0) - the membrane proton channel. F(1) has five subunits: alpha(3), beta(3), gamma(1), delta(1), epsilon(1). F(0) has three main subunits: a(1), b(2) and c(10-14). The alpha and beta chains form an alternating ring which encloses part of the gamma chain. F(1) is attached to F(0) by a central stalk formed by the gamma and epsilon chains, while a peripheral stalk is formed by the delta and b chains.

It is found in the cell inner membrane. Functionally, f(1)F(0) ATP synthase produces ATP from ADP in the presence of a proton or sodium gradient. F-type ATPases consist of two structural domains, F(1) containing the extramembraneous catalytic core and F(0) containing the membrane proton channel, linked together by a central stalk and a peripheral stalk. During catalysis, ATP synthesis in the catalytic domain of F(1) is coupled via a rotary mechanism of the central stalk subunits to proton translocation. In terms of biological role, this protein is part of the stalk that links CF(0) to CF(1). It either transmits conformational changes from CF(0) to CF(1) or is implicated in proton conduction. This is ATP synthase subunit delta from Alcanivorax borkumensis (strain ATCC 700651 / DSM 11573 / NCIMB 13689 / SK2).